A 332-amino-acid polypeptide reads, in one-letter code: dTDP-3,4-didehydro-2,6-dideoxy-alpha-D-glucose 3-reductase (332 aa).

An NADP(+)-binding site is contributed by 12 to 18 (CASFAWR). Arginine 19 contributes to the substrate binding site. Residues 37–38 (SR), tyrosine 58, leucine 74, and histidine 79 each bind NADP(+). The Proton donor role is filled by lysine 97. The NADP(+) site is built by arginine 165 and aspartate 177. Positions 235 and 255 each coordinate substrate.

It belongs to the Gfo/Idh/MocA family. Monomer.

It carries out the reaction dTDP-4-dehydro-2,6-dideoxy-alpha-D-glucose + NADP(+) = dTDP-3,4-didehydro-2,6-dideoxy-alpha-D-glucose + NADPH + H(+). Involved in the biosynthesis of forosamine ((4-dimethylamino)-2,3,4,6-tetradeoxy-alpha-D-threo-hexopyranose), a highly deoxygenated sugar component of several bioactive natural products such as the insecticidal spinosyns A and D. Catalyzes the reduction of the C-3 keto moiety of dTDP-3,4-diketo-2,6-dideoxy-alpha-D-glucose to yield dTDP-4-keto-2,6-dideoxy-alpha-D-glucose. NADPH is the better reductant, however NADH can also be used. The chain is dTDP-3,4-didehydro-2,6-dideoxy-alpha-D-glucose 3-reductase from Saccharopolyspora spinosa.